The chain runs to 346 residues: Methionine import ATP-binding protein MetN 1 (346 aa).

The ABC transporter domain occupies 2 to 241; it reads IELKNVSKVF…PQHVTTKKFV (240 aa). 38–45 serves as a coordination point for ATP; that stretch reads GYSGAGKS.

It belongs to the ABC transporter superfamily. Methionine importer (TC 3.A.1.24) family. The complex is composed of two ATP-binding proteins (MetN), two transmembrane proteins (MetI) and a solute-binding protein (MetQ).

It is found in the cell membrane. It carries out the reaction L-methionine(out) + ATP + H2O = L-methionine(in) + ADP + phosphate + H(+). The catalysed reaction is D-methionine(out) + ATP + H2O = D-methionine(in) + ADP + phosphate + H(+). Part of the ABC transporter complex MetNIQ involved in methionine import. Responsible for energy coupling to the transport system. This chain is Methionine import ATP-binding protein MetN 1, found in Bacillus cereus (strain ATCC 10987 / NRS 248).